Reading from the N-terminus, the 1961-residue chain is Myosin-9 (1961 aa).

At Ala-2 the chain carries N-acetylalanine. The tract at residues 2–838 (AQQAADKYLY…RLFTKVKPLL (837 aa)) is mediates interaction with LIMCH1. Lys-8 carries the N6-acetyllysine modification. Tyr-11 carries the post-translational modification Phosphotyrosine. One can recognise a Myosin N-terminal SH3-like domain in the interval 27-77 (GAKKLVWVPSTKNGFEPASLKEEVGEEAIVELVENGKKVKVNKDDIQKMNP). Positions 81 to 776 (SKVEDMAELT…VLAHLEEERD (696 aa)) constitute a Myosin motor domain. Lys-102 bears the N6-acetyllysine mark. 174 to 181 (GESGAGKT) contacts ATP. An N6-acetyllysine mark is found at Lys-299, Lys-435, and Lys-613. Ser-628 carries the phosphoserine modification. The segment at 654–676 (LAKLMATLRNTNPNFVCCIIPNH) is actin-binding. Tyr-754 bears the Phosphotyrosine mark. Residues 779–808 (ITDVIIGFQACCRGYLARKAFAKRQQQLTA) enclose the IQ domain. Residues 841-1927 (IRHEDELLAK…LKNKLRRGDM (1087 aa)) adopt a coiled-coil conformation. Residue Lys-850 is modified to N6-succinyllysine. 3 positions are modified to N6-acetyllysine: Lys-860, Lys-975, and Lys-1024. Over residues 1035 to 1055 (RLRREEKQRQELEKTRRKLEG) the composition is skewed to basic and acidic residues. The segment at 1035–1057 (RLRREEKQRQELEKTRRKLEGDS) is disordered. Ser-1114 is modified (phosphoserine). Lys-1234 and Lys-1249 each carry N6-acetyllysine. The interval 1331–1353 (LKQMEDEKNSFREQLEEEEEEAK) is disordered. Residues 1332-1344 (KQMEDEKNSFREQ) are compositionally biased toward basic and acidic residues. N6-acetyllysine occurs at positions 1358, 1393, 1405, 1411, 1460, and 1639. At Lys-1670 the chain carries N6-succinyllysine. Ser-1715 carries the phosphoserine modification. N6-acetyllysine occurs at positions 1794, 1803, and 1846. The segment at 1878 to 1910 (RQLEEAEEEAQRANASRRKLQRELEDATETADA) is disordered. Omega-N-methylarginine is present on Arg-1924. The interval 1938-1961 (KGTGDCSDEEVDGKADGADAKATE) is disordered. A Phosphoserine modification is found at Ser-1944. Positions 1949–1961 (DGKADGADAKATE) are enriched in basic and acidic residues.

Belongs to the TRAFAC class myosin-kinesin ATPase superfamily. Myosin family. As to quaternary structure, myosin is a hexameric protein that consists of 2 heavy chain subunits (MHC), 2 alkali light chain subunits (MLC) and 2 regulatory light chain subunits (MLC-2). Interacts with RASIP1. Interacts with DDR1. Interacts with PDLIM2. Interacts with SVIL. Interacts with HTRA3. Interacts with Myo7a. Interacts with CFAP95. Interacts with LIMCH1; independently of the integration of MYH9 into the myosin complex. Interacts with RAB3A. Interacts with ZBED4. Interacts with S100A4; this interaction increases cell motility. In terms of processing, ISGylated. Ubiquitination.

It localises to the cytoplasm. The protein localises to the cytoskeleton. Its subcellular location is the cell cortex. The protein resides in the cytoplasmic vesicle. It is found in the secretory vesicle. It localises to the cortical granule. Its function is as follows. Cellular myosin that appears to play a role in cytokinesis, cell shape, and specialized functions such as secretion and capping. Required for cortical actin clearance prior to oocyte exocytosis. Promotes cell motility in conjunction with S100A4. During cell spreading, plays an important role in cytoskeleton reorganization, focal contact formation (in the margins but not the central part of spreading cells), and lamellipodial retraction; this function is mechanically antagonized by MYH10. This is Myosin-9 (Myh9) from Rattus norvegicus (Rat).